A 247-amino-acid chain; its full sequence is NAD(P)H-quinone oxidoreductase subunit K, chloroplastic (247 aa).

4 residues coordinate [4Fe-4S] cluster: cysteine 64, cysteine 65, cysteine 129, and cysteine 160.

Belongs to the complex I 20 kDa subunit family. As to quaternary structure, NDH is composed of at least 16 different subunits, 5 of which are encoded in the nucleus. Requires [4Fe-4S] cluster as cofactor.

The protein localises to the plastid. The protein resides in the chloroplast thylakoid membrane. The enzyme catalyses a plastoquinone + NADH + (n+1) H(+)(in) = a plastoquinol + NAD(+) + n H(+)(out). The catalysed reaction is a plastoquinone + NADPH + (n+1) H(+)(in) = a plastoquinol + NADP(+) + n H(+)(out). Functionally, NDH shuttles electrons from NAD(P)H:plastoquinone, via FMN and iron-sulfur (Fe-S) centers, to quinones in the photosynthetic chain and possibly in a chloroplast respiratory chain. The immediate electron acceptor for the enzyme in this species is believed to be plastoquinone. Couples the redox reaction to proton translocation, and thus conserves the redox energy in a proton gradient. This is NAD(P)H-quinone oxidoreductase subunit K, chloroplastic from Mesostigma viride (Green alga).